The sequence spans 317 residues: Olfactory receptor 8B3 (317 aa).

The Extracellular segment spans residues 1 to 32 (MISMLAGNGSSVTEFVLAGLTDRPELQLPLFY). N-linked (GlcNAc...) asparagine glycosylation is present at N8. A helical membrane pass occupies residues 33–53 (LFLIIYIITVVGNLGLIILIG). Residues 54–59 (LNPHLH) lie on the Cytoplasmic side of the membrane. Residues 60–80 (TPMYYFLFNLSFIDLCYSSVF) form a helical membrane-spanning segment. The Extracellular portion of the chain corresponds to 81 to 97 (SPKMLINFVSEKNSISY). The chain crosses the membrane as a helical span at residues 98–118 (AGCMTQLFLFLFFVISECYML). The Cytoplasmic segment spans residues 119–136 (TSMAYDRYVAICNPLLYK). A helical transmembrane segment spans residues 137–157 (VTMSPQICSVISFAAYGMGFA). The Extracellular portion of the chain corresponds to 158 to 199 (GSSAHTGCMLRLTFCNVNVINHYLCDILPLLQLSCTSTYVNE). A helical transmembrane segment spans residues 200 to 220 (VVVLIVVGINITVPSFTILIS). Topologically, residues 221 to 242 (YVFILANILNIKSTQGRAKAFS) are cytoplasmic. A helical transmembrane segment spans residues 243 to 263 (TCSSHIMAISLFFGSAAFMYL). The Extracellular portion of the chain corresponds to 264 to 274 (KYSSGSMEQGK). Residues 275-294 (ISSVFYTNVGPMLNPLIYSL) form a helical membrane-spanning segment. At 295 to 317 (RNKDVKVALRKSLIKFREKTDFN) the chain is on the cytoplasmic side.

The protein belongs to the G-protein coupled receptor 1 family.

It localises to the cell membrane. Odorant receptor. The chain is Olfactory receptor 8B3 from Mus musculus (Mouse).